The following is a 152-amino-acid chain: UPF0225 protein YchJ (152 aa).

This sequence belongs to the UPF0225 family.

The protein is UPF0225 protein YchJ of Escherichia coli O17:K52:H18 (strain UMN026 / ExPEC).